We begin with the raw amino-acid sequence, 331 residues long: ATP-dependent 6-phosphofructokinase (331 aa).

G12 lines the ATP pocket. ADP is bound by residues 22–26 (RGVVR) and 55–60 (RYSVSD). ATP contacts are provided by residues 73–74 (RF) and 103–106 (GDGS). Mg(2+) is bound at residue D104. 127–129 (TID) provides a ligand contact to substrate. The active-site Proton acceptor is D129. An ADP-binding site is contributed by R156. Substrate-binding positions include R164 and 171–173 (MGR). Residues 187 to 189 (GCE), K213, and 215 to 217 (KKH) contribute to the ADP site. Substrate contacts are provided by residues E224, R245, and 251 to 254 (HIQR).

This sequence belongs to the phosphofructokinase type A (PFKA) family. ATP-dependent PFK group I subfamily. Prokaryotic clade 'B1' sub-subfamily. Homotetramer. Mg(2+) is required as a cofactor.

Its subcellular location is the cytoplasm. It catalyses the reaction beta-D-fructose 6-phosphate + ATP = beta-D-fructose 1,6-bisphosphate + ADP + H(+). The protein operates within carbohydrate degradation; glycolysis; D-glyceraldehyde 3-phosphate and glycerone phosphate from D-glucose: step 3/4. With respect to regulation, allosterically activated by ADP and other diphosphonucleosides, and allosterically inhibited by phosphoenolpyruvate. Catalyzes the phosphorylation of D-fructose 6-phosphate to fructose 1,6-bisphosphate by ATP, the first committing step of glycolysis. The chain is ATP-dependent 6-phosphofructokinase from Yersinia enterocolitica serotype O:8 / biotype 1B (strain NCTC 13174 / 8081).